Here is a 208-residue protein sequence, read N- to C-terminus: MLKLAIPKGRLEEKVMELLKKAGYTFQKESSILREGEDVTCFMVRPFDVPTYLTYGVADIGFCGTDVLLEKETSLIQPFFIPTNVSRMVLAGPKGKKIPEGEKRIATKFPNITRRYCESRGWHCKIIPLKGSVELAPIAGLSDLIVDITETGRTLRENDLEVLDEIFIIRTHVVVNPVSYRTKREEVISFLEKLQEVMKNDNHEKSHR.

The protein belongs to the ATP phosphoribosyltransferase family. Short subfamily. Heteromultimer composed of HisG and HisZ subunits.

The protein resides in the cytoplasm. The enzyme catalyses 1-(5-phospho-beta-D-ribosyl)-ATP + diphosphate = 5-phospho-alpha-D-ribose 1-diphosphate + ATP. Its pathway is amino-acid biosynthesis; L-histidine biosynthesis; L-histidine from 5-phospho-alpha-D-ribose 1-diphosphate: step 1/9. Functionally, catalyzes the condensation of ATP and 5-phosphoribose 1-diphosphate to form N'-(5'-phosphoribosyl)-ATP (PR-ATP). Has a crucial role in the pathway because the rate of histidine biosynthesis seems to be controlled primarily by regulation of HisG enzymatic activity. The polypeptide is ATP phosphoribosyltransferase (Thermotoga neapolitana (strain ATCC 49049 / DSM 4359 / NBRC 107923 / NS-E)).